A 478-amino-acid polypeptide reads, in one-letter code: Aspartyl/glutamyl-tRNA(Asn/Gln) amidotransferase subunit B (478 aa).

Belongs to the GatB/GatE family. GatB subfamily. As to quaternary structure, heterotrimer of A, B and C subunits.

The catalysed reaction is L-glutamyl-tRNA(Gln) + L-glutamine + ATP + H2O = L-glutaminyl-tRNA(Gln) + L-glutamate + ADP + phosphate + H(+). The enzyme catalyses L-aspartyl-tRNA(Asn) + L-glutamine + ATP + H2O = L-asparaginyl-tRNA(Asn) + L-glutamate + ADP + phosphate + 2 H(+). Its function is as follows. Allows the formation of correctly charged Asn-tRNA(Asn) or Gln-tRNA(Gln) through the transamidation of misacylated Asp-tRNA(Asn) or Glu-tRNA(Gln) in organisms which lack either or both of asparaginyl-tRNA or glutaminyl-tRNA synthetases. The reaction takes place in the presence of glutamine and ATP through an activated phospho-Asp-tRNA(Asn) or phospho-Glu-tRNA(Gln). This chain is Aspartyl/glutamyl-tRNA(Asn/Gln) amidotransferase subunit B, found in Syntrophotalea carbinolica (strain DSM 2380 / NBRC 103641 / GraBd1) (Pelobacter carbinolicus).